Here is a 350-residue protein sequence, read N- to C-terminus: uncharacterized protein (350 aa).

Functionally, may play a role in septum formation. This is an uncharacterized protein from Mycobacterium tuberculosis (strain CDC 1551 / Oshkosh).